We begin with the raw amino-acid sequence, 330 residues long: Aspartate--ammonia ligase (330 aa).

This sequence belongs to the class-II aminoacyl-tRNA synthetase family. AsnA subfamily.

Its subcellular location is the cytoplasm. The catalysed reaction is L-aspartate + NH4(+) + ATP = L-asparagine + AMP + diphosphate + H(+). The protein operates within amino-acid biosynthesis; L-asparagine biosynthesis; L-asparagine from L-aspartate (ammonia route): step 1/1. The polypeptide is Aspartate--ammonia ligase (Streptococcus pyogenes serotype M5 (strain Manfredo)).